The primary structure comprises 503 residues: L-amino-acid oxidase (503 aa).

Residues 1–18 form the signal peptide; sequence MNVFFMFSLLFLAALGSC. C28 and C191 are oxidised to a cystine. Residues 61-62, 81-82, R89, and 105-108 contribute to the FAD site; these read MS, EA, and GPMR. R108 serves as a coordination point for substrate. A glycan (N-linked (GlcNAc...) asparagine) is linked at N190. H241 provides a ligand contact to substrate. V279 contributes to the FAD binding site. C349 and C430 are disulfide-bonded. Residue Y390 coordinates substrate. Residues E475 and 482–487 each bind FAD; that span reads GWIDST. 482–483 contributes to the substrate binding site; that stretch reads GW.

It belongs to the flavin monoamine oxidase family. FIG1 subfamily. As to quaternary structure, homodimer; non-covalently linked. Requires FAD as cofactor. N-glycosylated. The enzymatic activity is not affected by deglycosylation. In terms of tissue distribution, expressed by the venom gland.

It localises to the secreted. The enzyme catalyses an L-alpha-amino acid + O2 + H2O = a 2-oxocarboxylate + H2O2 + NH4(+). It carries out the reaction L-leucine + O2 + H2O = 4-methyl-2-oxopentanoate + H2O2 + NH4(+). It catalyses the reaction L-phenylalanine + O2 + H2O = 3-phenylpyruvate + H2O2 + NH4(+). The catalysed reaction is L-methionine + O2 + H2O = 4-methylsulfanyl-2-oxobutanoate + H2O2 + NH4(+). The enzyme catalyses L-isoleucine + O2 + H2O = (S)-3-methyl-2-oxopentanoate + H2O2 + NH4(+). Its function is as follows. Catalyzes an oxidative deamination of predominantly hydrophobic and aromatic L-amino acids, thus producing hydrogen peroxide that may contribute to the diverse toxic effects of this enzyme. Is highly active on L-Met, L-Leu, L-Phe and L-Ile. Exhibits diverse biological activities, such as antibacterial on both Gram-positive and Gram-negative bacteria and antiparasitic activities, as well as induction of platelet aggregation. Effects of snake L-amino oxidases on platelets are controversial, since they either induce aggregation or inhibit agonist-induced aggregation. These different effects are probably due to different experimental conditions. This protein may also have activities in hemorrhage, hemolysis, edema, and apoptosis. The polypeptide is L-amino-acid oxidase (Bothrops pauloensis (Neuwied's lancehead)).